Reading from the N-terminus, the 114-residue chain is Probable prefoldin subunit 2 (114 aa).

The protein belongs to the prefoldin subunit beta family. As to quaternary structure, heterohexamer of two PFD-alpha type and four PFD-beta type subunits.

Binds specifically to cytosolic chaperonin (c-CPN) and transfers target proteins to it. Binds to nascent polypeptide chain and promotes folding in an environment in which there are many competing pathways for nonnative proteins. The protein is Probable prefoldin subunit 2 of Schizosaccharomyces pombe (strain 972 / ATCC 24843) (Fission yeast).